The following is a 547-amino-acid chain: Probable ABC transporter periplasmic-binding protein SapA (547 aa).

The signal sequence occupies residues 1–21; that stretch reads MRQVLSSLLVIAGLVSGQAIA.

This sequence belongs to the bacterial solute-binding protein 5 family.

The protein localises to the periplasm. In terms of biological role, not part of a putrescine export system. Very similar to a S.typhimurium protein implicated in antimicrobial peptide resistance, but the SapBCDF operon in E.coli is implicated in putrescine export. This Escherichia coli (strain K12) protein is Probable ABC transporter periplasmic-binding protein SapA (sapA).